Reading from the N-terminus, the 277-residue chain is Undecaprenyl-diphosphatase (277 aa).

6 helical membrane passes run Leu-53–Gly-73, Val-85–Ile-105, Trp-108–Trp-128, Ala-183–Ser-203, Gly-215–Val-235, and Phe-250–Val-270.

The protein belongs to the UppP family.

It localises to the cell inner membrane. The enzyme catalyses di-trans,octa-cis-undecaprenyl diphosphate + H2O = di-trans,octa-cis-undecaprenyl phosphate + phosphate + H(+). Catalyzes the dephosphorylation of undecaprenyl diphosphate (UPP). Confers resistance to bacitracin. The protein is Undecaprenyl-diphosphatase of Azotobacter vinelandii (strain DJ / ATCC BAA-1303).